The primary structure comprises 307 residues: Small ribosomal subunit biogenesis GTPase RsgA (307 aa).

Residues 80–237 enclose the CP-type G domain; that stretch reads KVDLRQAIVS…IVDTPGIKEF (158 aa). GTP contacts are provided by residues 129 to 132 and 180 to 188; these read NKID and GQSGVGKSS. Zn(2+)-binding residues include Cys261, Cys266, His268, and Cys274.

The protein belongs to the TRAFAC class YlqF/YawG GTPase family. RsgA subfamily. In terms of assembly, monomer. Associates with 30S ribosomal subunit, binds 16S rRNA. Zn(2+) is required as a cofactor.

The protein resides in the cytoplasm. Functionally, one of several proteins that assist in the late maturation steps of the functional core of the 30S ribosomal subunit. Helps release RbfA from mature subunits. May play a role in the assembly of ribosomal proteins into the subunit. Circularly permuted GTPase that catalyzes slow GTP hydrolysis, GTPase activity is stimulated by the 30S ribosomal subunit. The polypeptide is Small ribosomal subunit biogenesis GTPase RsgA (Borrelia garinii subsp. bavariensis (strain ATCC BAA-2496 / DSM 23469 / PBi) (Borreliella bavariensis)).